Here is a 99-residue protein sequence, read N- to C-terminus: Integration host factor subunit alpha (99 aa).

It belongs to the bacterial histone-like protein family. Heterodimer of an alpha and a beta chain.

Its function is as follows. This protein is one of the two subunits of integration host factor, a specific DNA-binding protein that functions in genetic recombination as well as in transcriptional and translational control. This Psychrobacter cryohalolentis (strain ATCC BAA-1226 / DSM 17306 / VKM B-2378 / K5) protein is Integration host factor subunit alpha.